The sequence spans 116 residues: Ribonuclease P protein component (116 aa).

This sequence belongs to the RnpA family. Consists of a catalytic RNA component (M1 or rnpB) and a protein subunit.

The catalysed reaction is Endonucleolytic cleavage of RNA, removing 5'-extranucleotides from tRNA precursor.. In terms of biological role, RNaseP catalyzes the removal of the 5'-leader sequence from pre-tRNA to produce the mature 5'-terminus. It can also cleave other RNA substrates such as 4.5S RNA. The protein component plays an auxiliary but essential role in vivo by binding to the 5'-leader sequence and broadening the substrate specificity of the ribozyme. This Geobacillus sp. (strain WCH70) protein is Ribonuclease P protein component.